The sequence spans 99 residues: MALTKAEMSEHLFEKLGLSKRDAKDLVELFFEEVRRALENGEQVKLSGFGNFDLRDKNQRPGRNPKTGEDIPITARRVVTFRPGQKLKSRVENASPKGE.

The segment at 49–73 (FGNFDLRDKNQRPGRNPKTGEDIPI) is disordered.

Belongs to the bacterial histone-like protein family. Heterodimer of an alpha and a beta chain.

In terms of biological role, this protein is one of the two subunits of integration host factor, a specific DNA-binding protein that functions in genetic recombination as well as in transcriptional and translational control. This chain is Integration host factor subunit alpha (ihfA), found in Serratia marcescens.